The sequence spans 449 residues: Anthocyanidin 3-O-glucosyltransferase 1 (449 aa).

Residue H3 is the Proton acceptor of the active site. H3 serves as a coordination point for an anthocyanidin. D103 functions as the Charge relay in the catalytic mechanism. Residues T125, A325, Q327, H342, W345, N346, S347, and E350 each coordinate UDP-alpha-D-glucose. A365 contributes to the an anthocyanidin binding site. Positions 366 and 367 each coordinate UDP-alpha-D-glucose.

This sequence belongs to the UDP-glycosyltransferase family. In terms of tissue distribution, expressed in cotyledons and roots, but not in leaves.

It carries out the reaction an anthocyanidin + UDP-alpha-D-glucose + H(+) = an anthocyanidin 3-O-beta-D-glucoside + UDP. It participates in pigment biosynthesis; anthocyanin biosynthesis. In the presence of other necessary color factors, this glycosylation reaction allows the accumulation of anthocyanin pigments. This is Anthocyanidin 3-O-glucosyltransferase 1 (GT1) from Manihot esculenta (Cassava).